Reading from the N-terminus, the 63-residue chain is Large ribosomal subunit protein bL32c (63 aa).

The interval 38–63 (RSFSGVSEHPKPKGFSRQQTNNRVLG) is disordered. Over residues 53–63 (SRQQTNNRVLG) the composition is skewed to polar residues.

The protein belongs to the bacterial ribosomal protein bL32 family.

It is found in the plastid. The protein resides in the chloroplast. The polypeptide is Large ribosomal subunit protein bL32c (rpl32) (Oryza sativa (Rice)).